Consider the following 426-residue polypeptide: Serine--tRNA ligase (426 aa).

L-serine is bound at residue 231–233 (TLE). An ATP-binding site is contributed by 262-264 (RSE). Residue Glu285 coordinates L-serine. 349–352 (EISS) provides a ligand contact to ATP. Ser385 is an L-serine binding site.

It belongs to the class-II aminoacyl-tRNA synthetase family. Type-1 seryl-tRNA synthetase subfamily. As to quaternary structure, homodimer. The tRNA molecule binds across the dimer.

Its subcellular location is the cytoplasm. The catalysed reaction is tRNA(Ser) + L-serine + ATP = L-seryl-tRNA(Ser) + AMP + diphosphate + H(+). It catalyses the reaction tRNA(Sec) + L-serine + ATP = L-seryl-tRNA(Sec) + AMP + diphosphate + H(+). Its pathway is aminoacyl-tRNA biosynthesis; selenocysteinyl-tRNA(Sec) biosynthesis; L-seryl-tRNA(Sec) from L-serine and tRNA(Sec): step 1/1. Catalyzes the attachment of serine to tRNA(Ser). Is also able to aminoacylate tRNA(Sec) with serine, to form the misacylated tRNA L-seryl-tRNA(Sec), which will be further converted into selenocysteinyl-tRNA(Sec). The chain is Serine--tRNA ligase from Malacoplasma penetrans (strain HF-2) (Mycoplasma penetrans).